Here is a 391-residue protein sequence, read N- to C-terminus: MAKSKFERTKPHVNIGTIGHVDHGKTSLTAAITKYFGEFKAYDQIDAAPEERARGITISTAHVEYETEKRHYAHVDCPGHADYVKNMITGAAQMDGAILVVSAADGPMPQTREHILLARQVGVPAIVVFLNKVDQVDDAELLELVELEVRELLSKYDFPGDDIPIVKGSALAALEDKDKSIGEDAVRLLMSEVDNYIPTPERPVDQPFLMPIEDVFSISGRGTVVTGRVERGVIKVGEEVEIIGIRPTSKTTVTGVEMFRKLLDQGQAGDNIGALLRGIDREGIERGQVLAKPASVTPHTRFKAEAYILTKDEGGRHTPFFTNYRPQFYFRTTDVTGIVTLPEGTEMVMPGDNVAMDVSLIVPIAMEEKLRFAIREGGRTVGAGIVSKIIE.

The tr-type G domain maps to Lys-10–Glu-201. Positions Gly-19 to Thr-26 are G1. Gly-19–Thr-26 is a binding site for GTP. Thr-26 is a Mg(2+) binding site. Residues Gly-55 to Ser-59 form a G2 region. A G3 region spans residues Asp-76–Gly-79. GTP contacts are provided by residues Asp-76–His-80 and Asn-131–Asp-134. Residues Asn-131 to Asp-134 form a G4 region. Positions Ser-169–Leu-171 are G5.

Belongs to the TRAFAC class translation factor GTPase superfamily. Classic translation factor GTPase family. EF-Tu/EF-1A subfamily. Monomer.

The protein localises to the cytoplasm. The enzyme catalyses GTP + H2O = GDP + phosphate + H(+). GTP hydrolase that promotes the GTP-dependent binding of aminoacyl-tRNA to the A-site of ribosomes during protein biosynthesis. The protein is Elongation factor Tu of Bartonella henselae (strain ATCC 49882 / DSM 28221 / CCUG 30454 / Houston 1) (Rochalimaea henselae).